The primary structure comprises 1255 residues: DNA-directed RNA polymerase subunit beta' (1255 aa).

The Zn(2+) site is built by cysteine 68, cysteine 70, cysteine 83, and cysteine 86. Mg(2+)-binding residues include aspartate 457, aspartate 459, and aspartate 461. Residues cysteine 803, cysteine 885, cysteine 892, and cysteine 895 each coordinate Zn(2+). The span at 1220-1240 shows a compositional bias: acidic residues; the sequence is NSDEEVSFTEDEYFEDEENDL. The interval 1220-1255 is disordered; that stretch reads NSDEEVSFTEDEYFEDEENDLSTENFDDLKFSEEEE. The span at 1246 to 1255 shows a compositional bias: basic and acidic residues; the sequence is DDLKFSEEEE.

This sequence belongs to the RNA polymerase beta' chain family. As to quaternary structure, the RNAP catalytic core consists of 2 alpha, 1 beta, 1 beta' and 1 omega subunit. When a sigma factor is associated with the core the holoenzyme is formed, which can initiate transcription. It depends on Mg(2+) as a cofactor. The cofactor is Zn(2+).

It catalyses the reaction RNA(n) + a ribonucleoside 5'-triphosphate = RNA(n+1) + diphosphate. DNA-dependent RNA polymerase catalyzes the transcription of DNA into RNA using the four ribonucleoside triphosphates as substrates. The protein is DNA-directed RNA polymerase subunit beta' of Lachnoclostridium phytofermentans (strain ATCC 700394 / DSM 18823 / ISDg) (Clostridium phytofermentans).